A 1790-amino-acid polypeptide reads, in one-letter code: Cytokinesis protein sepA (1790 aa).

2 disordered regions span residues 1 to 275 and 328 to 350; these read MPTS…YLTR and GEQK…GILE. Positions 24–35 are enriched in basic and acidic residues; the sequence is ERPVEDRWDAHG. 2 stretches are compositionally biased toward low complexity: residues 39 to 62 and 187 to 203; these read SLAP…SIQS and SHHS…SRMS. Polar residues predominate over residues 205-236; that stretch reads DQASIHSSLSSNTRGSSYISTDGSSRTTLPSH. The region spanning 274–702 is the GBD/FH3 domain; it reads TRPRDDRVVD…YVAMDRRLPD (429 aa). The span at 328 to 341 shows a compositional bias: basic and acidic residues; the sequence is GEQKRKQKARETHG. Positions 724–811 form a coiled coil; sequence AEARRAYDES…QRNELETREL (88 aa). The FH1 domain occupies 955–1136; that stretch reads DPEQATGLLG…NYLASQGAPS (182 aa). A compositionally biased stretch (basic and acidic residues) spans 975–986; it reads ADDAKDEGKPTE. 3 disordered regions span residues 975 to 1119, 1465 to 1484, and 1596 to 1790; these read ADDA…PPGT, NLSD…ITQR, and RAAA…PSTS. Composition is skewed to pro residues over residues 1015–1026 and 1033–1118; these read APPPPPPPPPAH and APPP…PPPG. The FH2 domain maps to 1141–1564; sequence VMSSIRPKKK…TEASLARKRI (424 aa). The stretch at 1435–1566 forms a coiled coil; the sequence is LQKLNVDQLR…ASLARKRINV (132 aa). One can recognise a DAD domain in the interval 1581-1613; sequence SPATSGAMDSLLEKLRAAAPQAKDQRDRRRRAR. Over residues 1608-1620 the composition is skewed to basic residues; that stretch reads RRRRARLKERHQV. Residues 1644–1661 show a composition bias toward polar residues; sequence SGATDTNATDSSLLSPTI. Basic and acidic residues predominate over residues 1694–1710; it reads PDPERTRRRRESAEEER. Over residues 1720-1746 the composition is skewed to polar residues; it reads GATSGSKDSNDTTPLSPVTEPTSTQGE.

This sequence belongs to the formin homology family. BNI1 subfamily.

Its function is as follows. Involved in cytokinesis. Overexpression results in growth inhibition. This chain is Cytokinesis protein sepA (sepA), found in Emericella nidulans (strain FGSC A4 / ATCC 38163 / CBS 112.46 / NRRL 194 / M139) (Aspergillus nidulans).